The sequence spans 861 residues: DNA mismatch repair protein MutS (861 aa).

Residue 618-625 coordinates ATP; sequence GPNMGGKS.

It belongs to the DNA mismatch repair MutS family.

In terms of biological role, this protein is involved in the repair of mismatches in DNA. It is possible that it carries out the mismatch recognition step. This protein has a weak ATPase activity. The polypeptide is DNA mismatch repair protein MutS (Shewanella frigidimarina (strain NCIMB 400)).